The primary structure comprises 60 residues: DNA-directed RNA polymerase subunit Rpo6 (60 aa).

Belongs to the archaeal Rpo6/eukaryotic RPB6 RNA polymerase subunit family. As to quaternary structure, part of the RNA polymerase complex.

The protein localises to the cytoplasm. It catalyses the reaction RNA(n) + a ribonucleoside 5'-triphosphate = RNA(n+1) + diphosphate. In terms of biological role, DNA-dependent RNA polymerase (RNAP) catalyzes the transcription of DNA into RNA using the four ribonucleoside triphosphates as substrates. The sequence is that of DNA-directed RNA polymerase subunit Rpo6 from Halobacterium salinarum (strain ATCC 700922 / JCM 11081 / NRC-1) (Halobacterium halobium).